The primary structure comprises 110 residues: Host transcription reprogramming factor 2 (110 aa).

An N-terminal signal peptide occupies residues 1–18 (MHLKASSILALLVIGANA). A C2H2-type zinc finger spans residues 68–96 (IMCGYCGKRFWNKPDLEKHIKLKPSKGGH). A disordered region spans residues 88–110 (KLKPSKGGHKGQPYKEHSWNRPT). The segment covering 100–110 (PYKEHSWNRPT) has biased composition (basic and acidic residues).

It is found in the secreted. The protein resides in the host nucleus. Functionally, secreted effector that translocates into the nuclei of host cells to reprogram the expression of immunity-associated genes by binding to effector binding elements (EBEs) in rice. Binds the 5'-CCACCTCC-3' EBE of promoters from targeted rice genes and probably recruits a yet to be determined host repressor. Causes ambivalent immunity with increased susceptibility to the hemibiotrophic pathogens Magnaporthe oryzae and Xanthomonas oryzae pv. oryzae, but enhances resistance to Cochliobolus miyabeanus, a necrotrophic pathogen. The protein is Host transcription reprogramming factor 2 of Pyricularia oryzae (strain 70-15 / ATCC MYA-4617 / FGSC 8958) (Rice blast fungus).